The chain runs to 452 residues: tRNA modification GTPase MnmE (452 aa).

3 residues coordinate (6S)-5-formyl-5,6,7,8-tetrahydrofolate: Arg-21, Glu-78, and Lys-118. One can recognise a TrmE-type G domain in the interval 214 to 375; that stretch reads GMKVVIAGRP…LREHLKQAMG (162 aa). A K(+)-binding site is contributed by Asn-224. GTP is bound by residues 224–229, 243–249, and 268–271; these read NAGKSS, TDIAGTT, and DTAG. Position 228 (Ser-228) interacts with Mg(2+). The K(+) site is built by Thr-243, Ile-245, and Thr-248. Thr-249 contacts Mg(2+). Lys-452 provides a ligand contact to (6S)-5-formyl-5,6,7,8-tetrahydrofolate.

This sequence belongs to the TRAFAC class TrmE-Era-EngA-EngB-Septin-like GTPase superfamily. TrmE GTPase family. Homodimer. Heterotetramer of two MnmE and two MnmG subunits. It depends on K(+) as a cofactor.

It is found in the cytoplasm. Exhibits a very high intrinsic GTPase hydrolysis rate. Involved in the addition of a carboxymethylaminomethyl (cmnm) group at the wobble position (U34) of certain tRNAs, forming tRNA-cmnm(5)s(2)U34. This is tRNA modification GTPase MnmE from Haemophilus influenzae (strain ATCC 51907 / DSM 11121 / KW20 / Rd).